Reading from the N-terminus, the 256-residue chain is uncharacterized protein (256 aa).

Residues 7–62 (PAERQKTLLNLISKQSVISINNLVNILGVSHMTVRRDIQKLEEDGKVISVSGGVQL) form the HTH deoR-type domain. Residues 24–43 (ISINNLVNILGVSHMTVRRD) constitute a DNA-binding region (H-T-H motif).

This is an uncharacterized protein from Haemophilus influenzae (strain ATCC 51907 / DSM 11121 / KW20 / Rd).